The sequence spans 394 residues: Phosphoglycerate kinase (394 aa).

Substrate contacts are provided by residues 21–23, Arg-36, 59–62, Arg-118, and Arg-151; these read DFN and HLGR. The residue at position 183 (Ser-183) is a Phosphoserine. Positions 201 and 292 each coordinate ATP. Phosphothreonine is present on Thr-299. ATP contacts are provided by residues Glu-323 and 350–353; that span reads GGDS.

This sequence belongs to the phosphoglycerate kinase family. As to quaternary structure, monomer.

The protein localises to the cytoplasm. It carries out the reaction (2R)-3-phosphoglycerate + ATP = (2R)-3-phospho-glyceroyl phosphate + ADP. It participates in carbohydrate degradation; glycolysis; pyruvate from D-glyceraldehyde 3-phosphate: step 2/5. In Bacillus thuringiensis (strain Al Hakam), this protein is Phosphoglycerate kinase.